The sequence spans 360 residues: Histidinol-phosphate aminotransferase (360 aa).

N6-(pyridoxal phosphate)lysine is present on Lys-222.

It belongs to the class-II pyridoxal-phosphate-dependent aminotransferase family. Histidinol-phosphate aminotransferase subfamily. In terms of assembly, homodimer. The cofactor is pyridoxal 5'-phosphate.

The enzyme catalyses L-histidinol phosphate + 2-oxoglutarate = 3-(imidazol-4-yl)-2-oxopropyl phosphate + L-glutamate. It functions in the pathway amino-acid biosynthesis; L-histidine biosynthesis; L-histidine from 5-phospho-alpha-D-ribose 1-diphosphate: step 7/9. In Listeria welshimeri serovar 6b (strain ATCC 35897 / DSM 20650 / CCUG 15529 / CIP 8149 / NCTC 11857 / SLCC 5334 / V8), this protein is Histidinol-phosphate aminotransferase.